The primary structure comprises 338 residues: 4-hydroxythreonine-4-phosphate dehydrogenase (338 aa).

Residues H136 and T137 each contribute to the substrate site. The a divalent metal cation site is built by H173, H218, and H273. Residues K281, N290, and R299 each contribute to the substrate site.

This sequence belongs to the PdxA family. Homodimer. The cofactor is Zn(2+). Requires Mg(2+) as cofactor. Co(2+) is required as a cofactor.

It localises to the cytoplasm. It carries out the reaction 4-(phosphooxy)-L-threonine + NAD(+) = 3-amino-2-oxopropyl phosphate + CO2 + NADH. The protein operates within cofactor biosynthesis; pyridoxine 5'-phosphate biosynthesis; pyridoxine 5'-phosphate from D-erythrose 4-phosphate: step 4/5. Catalyzes the NAD(P)-dependent oxidation of 4-(phosphooxy)-L-threonine (HTP) into 2-amino-3-oxo-4-(phosphooxy)butyric acid which spontaneously decarboxylates to form 3-amino-2-oxopropyl phosphate (AHAP). This Ralstonia nicotianae (strain ATCC BAA-1114 / GMI1000) (Ralstonia solanacearum) protein is 4-hydroxythreonine-4-phosphate dehydrogenase.